The primary structure comprises 699 residues: Elongation factor G (699 aa).

Positions 8 to 290 (ERYRNIGIMA…GVIEYLPSPV (283 aa)) constitute a tr-type G domain. GTP contacts are provided by residues 17–24 (AHIDAGKT), 88–92 (DTPGH), and 142–145 (NKMD).

It belongs to the TRAFAC class translation factor GTPase superfamily. Classic translation factor GTPase family. EF-G/EF-2 subfamily.

It is found in the cytoplasm. In terms of biological role, catalyzes the GTP-dependent ribosomal translocation step during translation elongation. During this step, the ribosome changes from the pre-translocational (PRE) to the post-translocational (POST) state as the newly formed A-site-bound peptidyl-tRNA and P-site-bound deacylated tRNA move to the P and E sites, respectively. Catalyzes the coordinated movement of the two tRNA molecules, the mRNA and conformational changes in the ribosome. The protein is Elongation factor G of Alkalilimnicola ehrlichii (strain ATCC BAA-1101 / DSM 17681 / MLHE-1).